An 88-amino-acid polypeptide reads, in one-letter code: Cell division topological specificity factor (88 aa).

Belongs to the MinE family.

Prevents the cell division inhibition by proteins MinC and MinD at internal division sites while permitting inhibition at polar sites. This ensures cell division at the proper site by restricting the formation of a division septum at the midpoint of the long axis of the cell. The chain is Cell division topological specificity factor from Clostridium botulinum (strain Alaska E43 / Type E3).